The following is a 483-amino-acid chain: Regulatory protein ViaA (483 aa).

It belongs to the ViaA family. Homodimer. Interacts with RavA.

The protein resides in the cytoplasm. In terms of biological role, component of the RavA-ViaA chaperone complex, which may act on the membrane to optimize the function of some of the respiratory chains. ViaA stimulates the ATPase activity of RavA. In Shigella dysenteriae serotype 1 (strain Sd197), this protein is Regulatory protein ViaA.